The chain runs to 400 residues: Nicotinate phosphoribosyltransferase (400 aa).

Position 220 is a phosphohistidine; by autocatalysis (histidine 220).

The protein belongs to the NAPRTase family. Transiently phosphorylated on a His residue during the reaction cycle. Phosphorylation strongly increases the affinity for substrates and increases the rate of nicotinate D-ribonucleotide production. Dephosphorylation regenerates the low-affinity form of the enzyme, leading to product release.

It catalyses the reaction nicotinate + 5-phospho-alpha-D-ribose 1-diphosphate + ATP + H2O = nicotinate beta-D-ribonucleotide + ADP + phosphate + diphosphate. It functions in the pathway cofactor biosynthesis; NAD(+) biosynthesis; nicotinate D-ribonucleotide from nicotinate: step 1/1. Its function is as follows. Catalyzes the synthesis of beta-nicotinate D-ribonucleotide from nicotinate and 5-phospho-D-ribose 1-phosphate at the expense of ATP. The chain is Nicotinate phosphoribosyltransferase from Salmonella typhimurium (strain LT2 / SGSC1412 / ATCC 700720).